The following is a 102-amino-acid chain: MAGQKIRIRLKSYDHEVIDQSAKKIVETVTNAGATVVGPVPLPTEKNVFCVIRSPHKYKDSREHFEMRTHKRLIDIVDPTPKAVDSLMHIDLPADVNIEIKL.

Belongs to the universal ribosomal protein uS10 family. As to quaternary structure, part of the 30S ribosomal subunit.

In terms of biological role, involved in the binding of tRNA to the ribosomes. In Bifidobacterium longum (strain DJO10A), this protein is Small ribosomal subunit protein uS10.